Consider the following 435-residue polypeptide: GTPase Obg (435 aa).

Residues 1–159 (MAFIDKCKIV…IEVVLELKTI (159 aa)) form the Obg domain. An OBG-type G domain is found at 160–329 (ADIGIIGLPN…MLDDVIKIYF (170 aa)). Residues 166-173 (GLPNAGKS), 191-195 (FTTLN), 212-215 (DIPG), 282-285 (NKID), and 310-312 (SAL) each bind GTP. Mg(2+)-binding residues include Ser173 and Thr193. The 81-residue stretch at 355 to 435 (TPKNKELDKT…IYDITLEFEE (81 aa)) folds into the OCT domain.

It belongs to the TRAFAC class OBG-HflX-like GTPase superfamily. OBG GTPase family. Monomer. It depends on Mg(2+) as a cofactor.

Its subcellular location is the cytoplasm. Functionally, an essential GTPase which binds GTP, GDP and possibly (p)ppGpp with moderate affinity, with high nucleotide exchange rates and a fairly low GTP hydrolysis rate. Plays a role in control of the cell cycle, stress response, ribosome biogenesis and in those bacteria that undergo differentiation, in morphogenesis control. The sequence is that of GTPase Obg from Ureaplasma urealyticum serovar 10 (strain ATCC 33699 / Western).